Here is a 232-residue protein sequence, read N- to C-terminus: MSENETSKTGGNAGVPGSGADAPSLSDSPAISGNDAVNLAAEQAKNTAHRNIPTLDDLPIPEDTANLRLGPNLHDGLLALLPLVGVWRGEGQADTPEGGQYSFGQQIIFSHDGENYLSFESRVWRLDSEGGTVGPDQRETGFWRINLQDEIEFVCAHASGVVEIYYGQPINERAWELESASTMVTATGPVTLGPGKRLYGLLPTNELGWVDERLVDKELKPRMSAQLHRIIG.

Polar residues predominate over residues 1–10 (MSENETSKTG). Residues 1–33 (MSENETSKTGGNAGVPGSGADAPSLSDSPAISG) are disordered. Residues 85–91 (GVWRGEG) carry the GXWXGXG motif.

It belongs to the nitrobindin family.

This Corynebacterium efficiens (strain DSM 44549 / YS-314 / AJ 12310 / JCM 11189 / NBRC 100395) protein is Ferric nitrobindin-like protein.